A 609-amino-acid polypeptide reads, in one-letter code: Rhotekin-2 (609 aa).

Residues 5–81 (SLRGPALRLA…LQKLEEQIAN (77 aa)) form the REM-1 domain. The stretch at 56–91 (KNLMVCNARLMAYTSELQKLEEQIANQTGRCDVKFE) forms a coiled coil. Residues 286-393 (EDAFAGFLNQ…WMEAFWQHFF (108 aa)) form the PH domain. Disordered stretches follow at residues 495–520 (HDEK…KSQS) and 554–609 (KPMA…QAQV). A compositionally biased stretch (basic and acidic residues) spans 569 to 582 (RLSDGEHTDTKTNF).

As to expression, expressed in lymphocytes, CD4 positive T-cells and bone marrow-derived cells. Also expressed in lung, colon, thymus and brain.

Functionally, may play an important role in lymphopoiesis. This Homo sapiens (Human) protein is Rhotekin-2 (RTKN2).